The following is a 177-amino-acid chain: Probable DNA-directed RNA polymerase subunit delta (177 aa).

An HTH HARE-type domain is found at 14–81 (CSMIEVVHSV…GENRWGLRSW (68 aa)). Positions 93–177 (PQPKPKKKRK…ETEEEEEEEL (85 aa)) are disordered. Residues 106 to 177 (DGFDDYIEED…ETEEEEEEEL (72 aa)) are compositionally biased toward acidic residues.

This sequence belongs to the RpoE family. In terms of assembly, RNAP is composed of a core of 2 alpha, a beta and a beta' subunits. The core is associated with a delta subunit and one of several sigma factors.

Its function is as follows. Participates in both the initiation and recycling phases of transcription. In the presence of the delta subunit, RNAP displays an increased specificity of transcription, a decreased affinity for nucleic acids, and an increased efficiency of RNA synthesis because of enhanced recycling. The sequence is that of Probable DNA-directed RNA polymerase subunit delta from Bacillus cereus (strain AH187).